We begin with the raw amino-acid sequence, 204 residues long: MSLKKNQLRAILNSSLGKLADHIIDSQSISICKQVVELPEWKRCKNVCLYMNMPKKEVRTRCLIDVAFKEGKNVFIPKCIGSHVMEMYQVFEKTESLTINKWGIAEPNGESRKIMDDETDCELIIVPGVAFDEKLSRLGHGKGYYDNYISKYQSWALQKESRANMFKVGICLKEQILPNREIPMDTRDQKLDALVTPEKVIRNI.

5–9 (KNQLR) is an ATP binding site. Substrate-binding positions include glutamate 57, tryptophan 102, and 140-144 (HGKGY). ATP-binding positions include 139–146 (GHGKGYYD) and aspartate 188.

Belongs to the 5-formyltetrahydrofolate cyclo-ligase family.

The enzyme catalyses (6S)-5-formyl-5,6,7,8-tetrahydrofolate + ATP = (6R)-5,10-methenyltetrahydrofolate + ADP + phosphate. This is Probable 5-formyltetrahydrofolate cyclo-ligase from Schizosaccharomyces pombe (strain 972 / ATCC 24843) (Fission yeast).